The following is a 223-amino-acid chain: Small ribosomal subunit protein uS3 (223 aa).

The KH type-2 domain occupies 39–107; the sequence is VREFLKQKLK…PVQVSVEEIR (69 aa).

Belongs to the universal ribosomal protein uS3 family. Part of the 30S ribosomal subunit. Forms a tight complex with proteins S10 and S14.

Functionally, binds the lower part of the 30S subunit head. Binds mRNA in the 70S ribosome, positioning it for translation. This Methylococcus capsulatus (strain ATCC 33009 / NCIMB 11132 / Bath) protein is Small ribosomal subunit protein uS3.